The chain runs to 319 residues: tRNA U34 carboxymethyltransferase (319 aa).

Carboxy-S-adenosyl-L-methionine-binding positions include K88, W102, K107, G126, 176 to 177 (LE), M192, Y196, and R311.

The protein belongs to the class I-like SAM-binding methyltransferase superfamily. CmoB family. Homotetramer.

The enzyme catalyses carboxy-S-adenosyl-L-methionine + 5-hydroxyuridine(34) in tRNA = 5-carboxymethoxyuridine(34) in tRNA + S-adenosyl-L-homocysteine + H(+). Its function is as follows. Catalyzes carboxymethyl transfer from carboxy-S-adenosyl-L-methionine (Cx-SAM) to 5-hydroxyuridine (ho5U) to form 5-carboxymethoxyuridine (cmo5U) at position 34 in tRNAs. In Azotobacter vinelandii (strain DJ / ATCC BAA-1303), this protein is tRNA U34 carboxymethyltransferase.